Reading from the N-terminus, the 86-residue chain is Small ribosomal subunit protein uS17 (86 aa).

This sequence belongs to the universal ribosomal protein uS17 family. Part of the 30S ribosomal subunit.

Its function is as follows. One of the primary rRNA binding proteins, it binds specifically to the 5'-end of 16S ribosomal RNA. This Halorhodospira halophila (strain DSM 244 / SL1) (Ectothiorhodospira halophila (strain DSM 244 / SL1)) protein is Small ribosomal subunit protein uS17.